The primary structure comprises 588 residues: WD repeat-containing protein DDB_G0349043 (588 aa).

The tract at residues 1–32 (MPLDNKVQLNENGKEVNNNNNNDEDLKIQDNH) is disordered. One can recognise a LisH domain in the interval 40-72 (NRSELVRLLIQSLNSLGYDKSAEFLEKDSGISL). A CTLH domain is found at 73-129 (QSKEINQFSECVVSGDWNKVEELLPFLKLNEFDTNNVKFLVYSQKFLEYLENHKIKE). WD repeat units lie at residues 244-283 (KHRD…LDQP), 294-333 (GHTK…LLKT), and 336-375 (KHSD…LTNS). Residues 376 to 403 (NNNNNNHNNNNSNINGNSINGSNNNGNN) are disordered. WD repeat units follow at residues 413-452 (WACA…TPEV), 455-494 (METD…IVQK), 499-539 (KQGR…LLET), and 542-582 (RHSG…NSFI).

The sequence is that of WD repeat-containing protein DDB_G0349043 from Dictyostelium discoideum (Social amoeba).